We begin with the raw amino-acid sequence, 189 residues long: Adenylate kinase (189 aa).

11–16 (GSGKGT) provides a ligand contact to ATP. The interval 31–60 (STGDVLRAEIKNGTELGKTAKGYIDQGQLI) is NMP. AMP-binding positions include Thr32, Arg37, 58-60 (QLI), 86-89 (GFPR), and Gln93. The LID stretch occupies residues 127-137 (KRGKDSGRADD). Residue Arg128 participates in ATP binding. 2 residues coordinate AMP: Arg134 and Arg145. Gly173 contributes to the ATP binding site.

This sequence belongs to the adenylate kinase family. Monomer.

It localises to the cytoplasm. It carries out the reaction AMP + ATP = 2 ADP. It participates in purine metabolism; AMP biosynthesis via salvage pathway; AMP from ADP: step 1/1. Its function is as follows. Catalyzes the reversible transfer of the terminal phosphate group between ATP and AMP. Plays an important role in cellular energy homeostasis and in adenine nucleotide metabolism. The sequence is that of Adenylate kinase from Bacteroides thetaiotaomicron (strain ATCC 29148 / DSM 2079 / JCM 5827 / CCUG 10774 / NCTC 10582 / VPI-5482 / E50).